The sequence spans 445 residues: Argininosuccinate synthase (445 aa).

ATP is bound by residues 17–25 (AFSGGLDTS) and A43. Y99 contributes to the L-citrulline binding site. Residues G129 and T131 each coordinate ATP. T131, N135, and D136 together coordinate L-aspartate. N135 is an L-citrulline binding site. ATP is bound at residue D136. L-citrulline is bound by residues R139 and S192. D194 lines the ATP pocket. L-citrulline contacts are provided by T201, E203, and E280.

It belongs to the argininosuccinate synthase family. Type 2 subfamily. Homotetramer.

The protein localises to the cytoplasm. The enzyme catalyses L-citrulline + L-aspartate + ATP = 2-(N(omega)-L-arginino)succinate + AMP + diphosphate + H(+). Its pathway is amino-acid biosynthesis; L-arginine biosynthesis; L-arginine from L-ornithine and carbamoyl phosphate: step 2/3. The protein is Argininosuccinate synthase of Rhodopseudomonas palustris (strain BisB18).